We begin with the raw amino-acid sequence, 623 residues long: ATP-dependent lipid A-core flippase (623 aa).

Transmembrane regions (helical) follow at residues 66–86, 103–123, 190–210, 290–310, and 317–337; these read LVLAVLLMAGAAATQPTLAVI, VWFLPLAVVGLILLRGICNFF, LVVIALIGVLLYMSWALTLII, LTPLTQVCISVAVGAVIAVAL, and ALTVGSFASFMAALAQIFDPI. Residues 67–349 enclose the ABC transmembrane type-1 domain; that stretch reads VLAVLLMAGA…LTNLAGKMQK (283 aa). An ABC transporter domain is found at 382-618; sequence VEFRAVSHRF…NGLYASLYNM (237 aa). 416 to 423 is a binding site for ATP; that stretch reads GRSGSGKT.

The protein belongs to the ABC transporter superfamily. Lipid exporter (TC 3.A.1.106) family. As to quaternary structure, homodimer.

It is found in the cell inner membrane. The enzyme catalyses ATP + H2O + lipid A-core oligosaccharideSide 1 = ADP + phosphate + lipid A-core oligosaccharideSide 2.. Involved in lipopolysaccharide (LPS) biosynthesis. Translocates lipid A-core from the inner to the outer leaflet of the inner membrane. Transmembrane domains (TMD) form a pore in the inner membrane and the ATP-binding domain (NBD) is responsible for energy generation. The sequence is that of ATP-dependent lipid A-core flippase from Bordetella pertussis (strain Tohama I / ATCC BAA-589 / NCTC 13251).